The sequence spans 342 residues: Phosphoribosylformylglycinamidine cyclo-ligase (342 aa).

This sequence belongs to the AIR synthase family.

It is found in the cytoplasm. The catalysed reaction is 2-formamido-N(1)-(5-O-phospho-beta-D-ribosyl)acetamidine + ATP = 5-amino-1-(5-phospho-beta-D-ribosyl)imidazole + ADP + phosphate + H(+). The protein operates within purine metabolism; IMP biosynthesis via de novo pathway; 5-amino-1-(5-phospho-D-ribosyl)imidazole from N(2)-formyl-N(1)-(5-phospho-D-ribosyl)glycinamide: step 2/2. The chain is Phosphoribosylformylglycinamidine cyclo-ligase from Staphylococcus aureus (strain MRSA252).